Here is a 278-residue protein sequence, read N- to C-terminus: Small ribosomal subunit biogenesis GTPase RsgA (278 aa).

The region spanning 62–218 (KNELTRPRVA…ICDTPGFNVI (157 aa)) is the CP-type G domain. Residues 112–115 (TKTD) and 162–170 (GQSGVGKSS) contribute to the GTP site. Zn(2+)-binding residues include Cys241, Cys246, His248, and Cys254.

The protein belongs to the TRAFAC class YlqF/YawG GTPase family. RsgA subfamily. As to quaternary structure, monomer. Associates with 30S ribosomal subunit, binds 16S rRNA. Requires Zn(2+) as cofactor.

It localises to the cytoplasm. Its function is as follows. One of several proteins that assist in the late maturation steps of the functional core of the 30S ribosomal subunit. Helps release RbfA from mature subunits. May play a role in the assembly of ribosomal proteins into the subunit. Circularly permuted GTPase that catalyzes slow GTP hydrolysis, GTPase activity is stimulated by the 30S ribosomal subunit. The sequence is that of Small ribosomal subunit biogenesis GTPase RsgA from Mycoplasma genitalium (strain ATCC 33530 / DSM 19775 / NCTC 10195 / G37) (Mycoplasmoides genitalium).